The following is a 473-amino-acid chain: Arginine biosynthesis bifunctional protein ArgJ, mitochondrial (473 aa).

Residues Thr-201, Lys-230, Thr-241, Glu-328, Asn-468, and Thr-473 each contribute to the substrate site. The active-site Nucleophile is the Thr-241.

It belongs to the ArgJ family. In terms of assembly, heterodimer of an alpha and a beta chain. In terms of processing, the alpha and beta chains are autoproteolytically processed from a single precursor protein within the mitochondrion.

The protein resides in the mitochondrion matrix. The enzyme catalyses N(2)-acetyl-L-ornithine + L-glutamate = N-acetyl-L-glutamate + L-ornithine. It carries out the reaction L-glutamate + acetyl-CoA = N-acetyl-L-glutamate + CoA + H(+). Its pathway is amino-acid biosynthesis; L-arginine biosynthesis; L-ornithine and N-acetyl-L-glutamate from L-glutamate and N(2)-acetyl-L-ornithine (cyclic): step 1/1. The protein operates within amino-acid biosynthesis; L-arginine biosynthesis; N(2)-acetyl-L-ornithine from L-glutamate: step 1/4. In terms of biological role, catalyzes two activities which are involved in the cyclic version of arginine biosynthesis: the synthesis of acetylglutamate from glutamate and acetyl-CoA, and of ornithine by transacetylation between acetylornithine and glutamate. The polypeptide is Arginine biosynthesis bifunctional protein ArgJ, mitochondrial (Paracoccidioides brasiliensis (strain Pb18)).